A 324-amino-acid polypeptide reads, in one-letter code: NAD(P)H-dependent D-xylose reductase I,II (324 aa).

Y54 serves as the catalytic Proton donor. H116 lines the substrate pocket. Residues 171-172 (SN), 220-229 (SSFGPQSFLE), and 276-286 (KSNNPERLAQN) each bind NAD(+).

It belongs to the aldo/keto reductase family.

It catalyses the reaction xylitol + NAD(+) = D-xylose + NADH + H(+). The catalysed reaction is xylitol + NADP(+) = D-xylose + NADPH + H(+). Its pathway is carbohydrate metabolism; D-xylose degradation. Reduces D-xylose into xylitol. Has a preference for NADPH, but can also utilize NADH as cosubstrate. This Candida tropicalis (Yeast) protein is NAD(P)H-dependent D-xylose reductase I,II (xyrA).